Here is a 180-residue protein sequence, read N- to C-terminus: Translation initiation factor IF-3 (180 aa).

It belongs to the IF-3 family. As to quaternary structure, monomer.

The protein localises to the cytoplasm. IF-3 binds to the 30S ribosomal subunit and shifts the equilibrium between 70S ribosomes and their 50S and 30S subunits in favor of the free subunits, thus enhancing the availability of 30S subunits on which protein synthesis initiation begins. In Escherichia coli (strain K12 / MC4100 / BW2952), this protein is Translation initiation factor IF-3.